Consider the following 93-residue polypeptide: Small ribosomal subunit protein uS19 (93 aa).

This sequence belongs to the universal ribosomal protein uS19 family.

Protein S19 forms a complex with S13 that binds strongly to the 16S ribosomal RNA. This chain is Small ribosomal subunit protein uS19, found in Nocardia farcinica (strain IFM 10152).